The primary structure comprises 284 residues: uncharacterized protein (284 aa).

Residues 1 to 10 (MSNSVTNFEM) show a composition bias toward polar residues. Residues 1 to 28 (MSNSVTNFEMSSVLPGKKPCQGKNNESQ) are disordered.

This is an uncharacterized protein from Escherichia coli (strain K12).